We begin with the raw amino-acid sequence, 471 residues long: BPI fold-containing family B member 1 (471 aa).

The first 18 residues, 1 to 18 (MTNPWIVSLLLGATLVQA), serve as a signal peptide directing secretion. Residues asparagine 150, asparagine 157, asparagine 260, and asparagine 397 are each glycosylated (N-linked (GlcNAc...) asparagine). Cysteine 154 and cysteine 197 are joined by a disulfide.

Belongs to the BPI/LBP/Plunc superfamily. Plunc family.

Its subcellular location is the secreted. May play a role in innate immunity in mouth, nose and lungs. Binds bacterial lipopolysaccharide (LPS) and modulates the cellular responses to LPS. The sequence is that of BPI fold-containing family B member 1 (Bpifb1) from Rattus norvegicus (Rat).